The primary structure comprises 497 residues: tRNA (adenine(58)-N(1))-methyltransferase non-catalytic subunit TRM6 (497 aa).

The tract at residues 81–103 is disordered; that stretch reads LEEPASETKEAGTDNRNIVDDGK. Residues 95 to 105 are substrate; sequence NRNIVDDGKSQ. The residue at position 108 (T108) is a Phosphothreonine. Substrate regions lie at residues 146–155 and 176–183; these read KYIKKKKKKY and REPGKINH. Positions 275-354 are disordered; that stretch reads MLSSEPKDST…EKQRRQEEQR (80 aa). Acidic residues predominate over residues 289–307; that stretch reads SNGELEEKEIAEQADEDNI. Positions 328–354 are enriched in basic and acidic residues; that stretch reads PENKEPKEKRSKRDYIQEKQRRQEEQR. The substrate site is built by R349 and R377. Substrate stretches follow at residues 415 to 423 and 434 to 441; these read RERGGVINL and QVLPDRSH. The segment at 474–497 is disordered; it reads TGALDPHKAEEPAAKKQKCMESAS. The span at 478 to 487 shows a compositional bias: basic and acidic residues; it reads DPHKAEEPAA.

Belongs to the TRM6/GCD10 family. Heterotetramer; composed of two copies of TRMT6 and two copies of TRMT61A.

The protein localises to the nucleus. Its function is as follows. Substrate-binding subunit of tRNA (adenine-N(1)-)-methyltransferase, which catalyzes the formation of N(1)-methyladenine at position 58 (m1A58) in initiator methionyl-tRNA. Together with the TRMT61A catalytic subunit, part of a mRNA N(1)-methyltransferase complex that mediates methylation of adenosine residues at the N(1) position of a small subset of mRNAs: N(1) methylation takes place in tRNA T-loop-like structures of mRNAs and is only present at low stoichiometries. This is tRNA (adenine(58)-N(1))-methyltransferase non-catalytic subunit TRM6 (Trmt6) from Mus musculus (Mouse).